Here is a 206-residue protein sequence, read N- to C-terminus: MATSHEDGSATHPNYYYYVDPSLPVYESQQPNPVDDLITIYGLEEVARQVARTNADGTKAVKLRKSYKNQIQDLSGRFITIPSRENGKGGEISDVIFQNNPDMMNQAKLVEGMSEEEYRDAMMKRDTGLFEPPQMDWDMCSTVIGQLMKSHPSEFKNSGFDVDDLAFDLNGTGTKTKKRKYKSNGSSMASPNTELQPDDMKRRRLE.

The tract at residues 171-206 (GTGTKTKKRKYKSNGSSMASPNTELQPDDMKRRRLE) is disordered. Over residues 183 to 195 (SNGSSMASPNTEL) the composition is skewed to polar residues.

Belongs to the Mediator complex subunit 19 family. Component of the Mediator complex.

The protein localises to the nucleus. In terms of biological role, component of the Mediator complex, a coactivator involved in the regulated transcription of nearly all RNA polymerase II-dependent genes. Mediator functions as a bridge to convey information from gene-specific regulatory proteins to the basal RNA polymerase II transcription machinery. Mediator is recruited to promoters by direct interactions with regulatory proteins and serves as a scaffold for the assembly of a functional preinitiation complex with RNA polymerase II and the general transcription factors. In Kluyveromyces lactis (strain ATCC 8585 / CBS 2359 / DSM 70799 / NBRC 1267 / NRRL Y-1140 / WM37) (Yeast), this protein is Mediator of RNA polymerase II transcription subunit 19 (ROX3).